The sequence spans 291 residues: Putative heme-binding peroxidase (291 aa).

The active-site Proton acceptor is the H61. A heme b-binding site is contributed by H185. The active-site Tryptophan radical intermediate is the W201.

Belongs to the peroxidase family. Cytochrome c peroxidase subfamily. The cofactor is heme b.

Destroys radicals which are normally produced within the cells and which are toxic to biological systems. In Candida albicans (strain SC5314 / ATCC MYA-2876) (Yeast), this protein is Putative heme-binding peroxidase (CCP2).